A 131-amino-acid polypeptide reads, in one-letter code: Large ribosomal subunit protein bL12 (131 aa).

It belongs to the bacterial ribosomal protein bL12 family. As to quaternary structure, homodimer. Part of the ribosomal stalk of the 50S ribosomal subunit. Forms a multimeric L10(L12)X complex, where L10 forms an elongated spine to which 2 to 4 L12 dimers bind in a sequential fashion. Binds GTP-bound translation factors.

Its function is as follows. Forms part of the ribosomal stalk which helps the ribosome interact with GTP-bound translation factors. Is thus essential for accurate translation. This Prochlorococcus marinus (strain MIT 9313) protein is Large ribosomal subunit protein bL12.